Here is a 986-residue protein sequence, read N- to C-terminus: P3N-PIPO polyprotein (986 aa).

The 144-residue stretch at 141-284 (KLTEGQMNHL…QSILNSMIQF (144 aa)) folds into the Peptidase S30 domain. Catalysis depends on for P1 proteinase activity residues H192, D201, and S235. An Involved in interaction with stylet and aphid transmission motif is present at residues 334–337 (KITC). The Involved in virions binding and aphid transmission signature appears at 592–594 (PTK). Positions 618–740 (LYIAKQGYCY…ESDIKHYRVG (123 aa)) constitute a Peptidase C6 domain. Residues C626 and H699 each act as for helper component proteinase activity in the active site.

It belongs to the potyviridae P3N-PIPO polyprotein family. In terms of assembly, interacts (via PIPO domain) with host PCaP1 protein; this interaction may help to anchor the movement complex to the plasma membrane from which the complex could move to the plasmodesmata. Potyviral RNA is expressed as two polyproteins which undergo post-translational proteolytic processing. Genome polyprotein is processed by NIa-pro, P1 and HC-pro proteinases resulting in the production of at least ten individual proteins. P3N-PIPO is cleaved by P1 and HC-pro proteinases resulting in the production of three individual proteins. The P1 proteinase and the HC-pro cleave only their respective C-termini autocatalytically.

It localises to the host cell junction. The protein resides in the host plasmodesma. It catalyses the reaction Hydrolyzes a Gly-|-Gly bond at its own C-terminus, commonly in the sequence -Tyr-Xaa-Val-Gly-|-Gly, in the processing of the potyviral polyprotein.. Required for aphid transmission and also has proteolytic activity. Only cleaves a Gly-Gly dipeptide at its own C-terminus. Interacts with virions and aphid stylets. Acts as a suppressor of RNA-mediated gene silencing, also known as post-transcriptional gene silencing (PTGS), a mechanism of plant viral defense that limits the accumulation of viral RNAs. May have RNA-binding activity. Its function is as follows. Allows efficient cell to cell propagation, by bypassing the host cell wall barrier. Transports viral genome to neighboring plant cells directly through plasmosdesmata, without any budding. This is P3N-PIPO polyprotein from Potato virus Y (strain N) (PVY).